The sequence spans 316 residues: Phosphate acyltransferase (316 aa).

This sequence belongs to the PlsX family. As to quaternary structure, homodimer. Probably interacts with PlsY.

It localises to the cytoplasm. The enzyme catalyses a fatty acyl-[ACP] + phosphate = an acyl phosphate + holo-[ACP]. It participates in lipid metabolism; phospholipid metabolism. Functionally, catalyzes the reversible formation of acyl-phosphate (acyl-PO(4)) from acyl-[acyl-carrier-protein] (acyl-ACP). This enzyme utilizes acyl-ACP as fatty acyl donor, but not acyl-CoA. The polypeptide is Phosphate acyltransferase (Chlamydia caviae (strain ATCC VR-813 / DSM 19441 / 03DC25 / GPIC) (Chlamydophila caviae)).